The primary structure comprises 858 residues: MNEKLRILFSFLCFFYVLLVSPSQSNGQDISLSCGASEPAVDQDKKKWEPDTKFLKTPNTVHAPATYQDPSLLSTVPYMTSRIFTAPATYEIPVKGDKRHMLRLHFYPSTYTGLNILDSYFSVAANDLTLLSNFSAAITCQALTQAYLVREYSLAPSEKDVLSIIFTPSDKHPKAFAFINGIEVIPMPELFDTASLVGFSDQTSDTKTANLQTMFRLNVGGQDIPGSQDSGGLTRTWYNDAPYIFSAGLGVTLQASNNFRIDYQKMPVSTAPADVYKTARSQGPNGDINMKSNLTWMFQVDTNFTYIMRLHFCEFQLAKINQKVFNIFINNRTAQGDTNPADILGWTGGKGIPTYKDYAIYVDANTGGGGEEISLQMTPSTFGQPEYYDSQLNGLEIFKIDTMKNLAGPNPKPSPMQANEDVKKDFQGDKRITAFVIGSAGGVAAVLFCALCFTMYQRKRKFSGSDSHTSSWLPIYGNSHTSATKSTISGKSNNGSHLSNLAAGLCRRFSLSEIKHGTHNFDESNVIGVGGFGKVYKGVIDGGTKVAIKKSNPNSEQGLNEFETEIELLSRLRHKHLVSLIGYCDEGGEMCLIYDYMSLGTLREHLYNTKRPQLTWKRRLEIAIGAARGLHYLHTGAKYTIIHRDVKTTNILLDENWVAKVSDFGLSKTGPNMNGGHVTTVVKGSFGYLDPEYFRRQQLTEKSDVYSFGVVLFEVLCARPALNPSLSKEQVSLGDWAMNCKRKGTLEDIIDPNLKGKINPECLKKFADTAEKCLSDSGLDRPTMGDVLWNLEFALQLQETADGSRHRTPSNGGGSVDLGGGGGGVTVNISAGESDLGDDLSSEENSGIFSQIVNPKGR.

The signal sequence occupies residues 1-27 (MNEKLRILFSFLCFFYVLLVSPSQSNG). Over 28–431 (QDISLSCGAS…VKKDFQGDKR (404 aa)) the chain is Extracellular. Asn-133, Asn-293, Asn-303, and Asn-331 each carry an N-linked (GlcNAc...) asparagine glycan. A helical transmembrane segment spans residues 432–452 (ITAFVIGSAGGVAAVLFCALC). At 453–858 (FTMYQRKRKF…FSQIVNPKGR (406 aa)) the chain is on the cytoplasmic side. The Protein kinase domain maps to 521 to 794 (FDESNVIGVG…GDVLWNLEFA (274 aa)). Residues 527–535 (IGVGGFGKV) and Lys-549 contribute to the ATP site. The active-site Proton acceptor is Asp-645. Positions 800 to 858 (TADGSRHRTPSNGGGSVDLGGGGGGVTVNISAGESDLGDDLSSEENSGIFSQIVNPKGR) are disordered. Positions 811–825 (NGGGSVDLGGGGGGV) are enriched in gly residues. A compositionally biased stretch (polar residues) spans 843–858 (EENSGIFSQIVNPKGR).

Belongs to the protein kinase superfamily. Ser/Thr protein kinase family. As to expression, expressed in pollen, but not in pistils or seedlings.

It is found in the cell membrane. The enzyme catalyses L-seryl-[protein] + ATP = O-phospho-L-seryl-[protein] + ADP + H(+). It catalyses the reaction L-threonyl-[protein] + ATP = O-phospho-L-threonyl-[protein] + ADP + H(+). In terms of biological role, receptor-like protein kinase that controls pollen tube behavior by directing rupture at proper timing to release the sperm cell. This Arabidopsis thaliana (Mouse-ear cress) protein is Receptor-like protein kinase ANXUR2 (ANX2).